The sequence spans 275 residues: Type III pantothenate kinase (275 aa).

An ATP-binding site is contributed by 6-13 (DAGNTNIV). A substrate-binding site is contributed by 108-111 (GADR). Aspartate 110 serves as the catalytic Proton acceptor. Aspartate 130 contacts K(+). Threonine 133 contacts ATP. A substrate-binding site is contributed by threonine 187.

Belongs to the type III pantothenate kinase family. In terms of assembly, homodimer. NH4(+) is required as a cofactor. Requires K(+) as cofactor.

It localises to the cytoplasm. The enzyme catalyses (R)-pantothenate + ATP = (R)-4'-phosphopantothenate + ADP + H(+). It participates in cofactor biosynthesis; coenzyme A biosynthesis; CoA from (R)-pantothenate: step 1/5. In terms of biological role, catalyzes the phosphorylation of pantothenate (Pan), the first step in CoA biosynthesis. In Zymomonas mobilis subsp. mobilis (strain ATCC 31821 / ZM4 / CP4), this protein is Type III pantothenate kinase.